The chain runs to 396 residues: MLDAQTIATVKATIPLLVETGPKLTAHFYDRMFTHNPELKEIFNMSNQRNGDQREALFNAIAAYASNIENLPALLPAVEKIAQKHTSFQIKPEQYNIVGEHLLATLDEMFSPGQEVLDAWGKAYGVLANVFINREAEIYNENASKAGGWEGTRDFRIVAKTPRSALITSFELEPVDGGAVAEYRPGQYLGVWLKPEGFPHQEIRQYSLTRKPDGKGYRIAVKREEGGQVSNWLHNHANVGDVVKLVAPAGDFFMAVADDTPVTLISTGVGQTPMLAMLDTLAKAGHTAQVNWFHAAENGEVHAFADEVKELGQSLPRFTAHTWYRQPSEADRAKGQFDSEGLMDLSKLEGAFSDPTMQFYLCGPVGFMQFTAKQLVDLGVKQENIHYECFGPHKVL.

The region spanning 1–136 (MLDAQTIATV…LANVFINREA (136 aa)) is the Globin domain. A heme b-binding site is contributed by His-85. Catalysis depends on charge relay system residues Tyr-95 and Glu-135. The reductase stretch occupies residues 147 to 396 (GGWEGTRDFR…YECFGPHKVL (250 aa)). The FAD-binding FR-type domain maps to 150-255 (EGTRDFRIVA…VAPAGDFFMA (106 aa)). FAD is bound by residues Tyr-188 and 204 to 207 (RQYS). 268–273 (GVGQTP) is a binding site for NADP(+). FAD is bound at residue 389 to 392 (CFGP).

It belongs to the globin family. Two-domain flavohemoproteins subfamily. The protein in the C-terminal section; belongs to the flavoprotein pyridine nucleotide cytochrome reductase family. It depends on heme b as a cofactor. FAD serves as cofactor.

The catalysed reaction is 2 nitric oxide + NADPH + 2 O2 = 2 nitrate + NADP(+) + H(+). It carries out the reaction 2 nitric oxide + NADH + 2 O2 = 2 nitrate + NAD(+) + H(+). In terms of biological role, is involved in NO detoxification in an aerobic process, termed nitric oxide dioxygenase (NOD) reaction that utilizes O(2) and NAD(P)H to convert NO to nitrate, which protects the bacterium from various noxious nitrogen compounds. Therefore, plays a central role in the inducible response to nitrosative stress. In Shigella flexneri, this protein is Flavohemoprotein.